The primary structure comprises 507 residues: Phytoene dehydrogenase (507 aa).

12–45 lines the FAD pocket; that stretch reads VVVGAGLAGLAAALHLLGAGRRVTVVEREDVPGG.

It belongs to the carotenoid/retinoid oxidoreductase family. It depends on FAD as a cofactor.

The protein operates within carotenoid biosynthesis; lycopene biosynthesis. Its function is as follows. This enzyme converts phytoene into zeta-carotene via the intermediary of phytofluene by the symmetrical introduction of two double bonds at the C-11 and C-11' positions of phytoene. In Streptomyces griseus, this protein is Phytoene dehydrogenase (crtI).